Consider the following 191-residue polypeptide: UPF0312 protein Shewmr4_1178 (191 aa).

The signal sequence occupies residues 1-22 (MKKQLLAALIGGSLLAPMAASA).

This sequence belongs to the UPF0312 family. Type 1 subfamily.

It is found in the periplasm. The chain is UPF0312 protein Shewmr4_1178 from Shewanella sp. (strain MR-4).